Reading from the N-terminus, the 181-residue chain is TATA-box-binding protein (181 aa).

2 consecutive repeat copies span residues 7–83 (IVNV…IKEL) and 98–173 (VQNM…SATL).

It belongs to the TBP family.

General factor that plays a role in the activation of archaeal genes transcribed by RNA polymerase. Binds specifically to the TATA box promoter element which lies close to the position of transcription initiation. This chain is TATA-box-binding protein, found in Methanococcus vannielii (strain ATCC 35089 / DSM 1224 / JCM 13029 / OCM 148 / SB).